The following is a 260-amino-acid chain: Coiled-coil domain-containing protein 127 (260 aa).

Residues 47–135 (ESQKEIEKAR…QIIQEKSQRQ (89 aa)) adopt a coiled-coil conformation.

In Rattus norvegicus (Rat), this protein is Coiled-coil domain-containing protein 127 (Ccdc127).